Here is a 255-residue protein sequence, read N- to C-terminus: Imidazole glycerol phosphate synthase subunit HisF (255 aa).

Active-site residues include Asp11 and Asp130.

Belongs to the HisA/HisF family. In terms of assembly, heterodimer of HisH and HisF.

The protein resides in the cytoplasm. It catalyses the reaction 5-[(5-phospho-1-deoxy-D-ribulos-1-ylimino)methylamino]-1-(5-phospho-beta-D-ribosyl)imidazole-4-carboxamide + L-glutamine = D-erythro-1-(imidazol-4-yl)glycerol 3-phosphate + 5-amino-1-(5-phospho-beta-D-ribosyl)imidazole-4-carboxamide + L-glutamate + H(+). Its pathway is amino-acid biosynthesis; L-histidine biosynthesis; L-histidine from 5-phospho-alpha-D-ribose 1-diphosphate: step 5/9. Its function is as follows. IGPS catalyzes the conversion of PRFAR and glutamine to IGP, AICAR and glutamate. The HisF subunit catalyzes the cyclization activity that produces IGP and AICAR from PRFAR using the ammonia provided by the HisH subunit. The chain is Imidazole glycerol phosphate synthase subunit HisF from Campylobacter jejuni (strain RM1221).